A 461-amino-acid chain; its full sequence is Adenine DNA glycosylase (461 aa).

Residue Glu69 is the Proton donor/acceptor of the active site. Residues Cys226, Cys233, Cys236, and Cys242 each contribute to the [4Fe-4S] cluster site. Residues 296–437 (QREERALVVI…RAALEIKKRK (142 aa)) form the Nudix hydrolase domain. The short motif at 340–366 (FGQESWPKDMDAEFQKSIAQWISNDSR) is the Nudix box element.

The protein belongs to the Nth/MutY family. As to quaternary structure, monomer. Requires [4Fe-4S] cluster as cofactor.

It catalyses the reaction Hydrolyzes free adenine bases from 7,8-dihydro-8-oxoguanine:adenine mismatched double-stranded DNA, leaving an apurinic site.. Functionally, adenine glycosylase active on G-A mispairs. Has glycosylase and nicking activities and is active at A/G and A/GO sites. This chain is Adenine DNA glycosylase (myh1), found in Schizosaccharomyces pombe (strain 972 / ATCC 24843) (Fission yeast).